A 1242-amino-acid chain; its full sequence is DNA excision repair protein ERCC-6-like (1242 aa).

Serine 14 carries the post-translational modification Phosphoserine. A TPR 1 repeat occupies tyrosine 21 to glutamate 54. In terms of domain architecture, Helicase ATP-binding spans serine 109 to glycine 277. Position 122-129 (aspartate 122–threonine 129) interacts with ATP. A DEAH box motif is present at residues aspartate 228–histidine 231. The region spanning phenylalanine 466–leucine 626 is the Helicase C-terminal domain. 2 positions are modified to phosphoserine: serine 755 and serine 773. Residue threonine 815 is modified to Phosphothreonine. Phosphoserine is present on residues serine 963, serine 989, serine 998, and serine 1021. Position 1055 is a phosphothreonine (threonine 1055). Phosphoserine occurs at positions 1061, 1090, and 1110. A disordered region spans residues glutamate 1103 to proline 1181. 2 stretches are compositionally biased toward basic and acidic residues: residues arginine 1105–glutamate 1121 and alanine 1130–arginine 1140. A compositionally biased stretch (polar residues) spans glutamate 1141 to lysine 1156. Phosphoserine occurs at positions 1173 and 1180. The TPR 2 repeat unit spans residues tyrosine 1192–aspartate 1225.

The protein belongs to the SNF2/RAD54 helicase family. Interacts with PLK1, which phosphorylates it. Both proteins are mutually dependent on each other for correct subcellular localization. Interacts (via N-terminal TPR repeat) with BEND3 (via BEN domains 1 and 3); the interaction is direct. Phosphorylation by PLK1 prevents the association with chromosome arms and restricts its localization to the kinetochore-centromere region.

It localises to the chromosome. It is found in the centromere. Its subcellular location is the kinetochore. The enzyme catalyses ATP + H2O = ADP + phosphate + H(+). Its function is as follows. DNA helicase that acts as a tension sensor that associates with catenated DNA which is stretched under tension until it is resolved during anaphase. Functions as ATP-dependent DNA translocase. Can promote Holliday junction branch migration (in vitro). The polypeptide is DNA excision repair protein ERCC-6-like (ERCC6L) (Bos taurus (Bovine)).